We begin with the raw amino-acid sequence, 502 residues long: Glycerol kinase (502 aa).

Thr-15 serves as a coordination point for ADP. Residues Thr-15, Thr-16, and Ser-17 each contribute to the ATP site. Thr-15 provides a ligand contact to sn-glycerol 3-phosphate. Arg-19 serves as a coordination point for ADP. Arg-85, Glu-86, and Tyr-137 together coordinate sn-glycerol 3-phosphate. Glycerol contacts are provided by Arg-85, Glu-86, and Tyr-137. At His-233 the chain carries Phosphohistidine; by HPr. Asp-247 is a sn-glycerol 3-phosphate binding site. The glycerol site is built by Asp-247 and Gln-248. ADP-binding residues include Thr-269 and Gly-312. 4 residues coordinate ATP: Thr-269, Gly-312, Gln-316, and Gly-413. ADP is bound by residues Gly-413 and Asn-417.

The protein belongs to the FGGY kinase family. In terms of assembly, homotetramer and homodimer (in equilibrium). Post-translationally, the phosphoenolpyruvate-dependent sugar phosphotransferase system (PTS), including enzyme I, and histidine-containing protein (HPr) are required for the phosphorylation, which leads to the activation of the enzyme.

The enzyme catalyses glycerol + ATP = sn-glycerol 3-phosphate + ADP + H(+). It participates in polyol metabolism; glycerol degradation via glycerol kinase pathway; sn-glycerol 3-phosphate from glycerol: step 1/1. Activated by phosphorylation and inhibited by fructose 1,6-bisphosphate (FBP). Key enzyme in the regulation of glycerol uptake and metabolism. Catalyzes the phosphorylation of glycerol to yield sn-glycerol 3-phosphate. This Streptococcus agalactiae serotype Ia (strain ATCC 27591 / A909 / CDC SS700) protein is Glycerol kinase.